The primary structure comprises 44 residues: Homeobox protein DLX-1 (44 aa).

The interval 19–44 (RALSAGSPPVPPGWNRIPPLGRAQEE) is disordered.

This sequence belongs to the distal-less homeobox family. In terms of assembly, interacts with SMAD4 (via homeobox DNA-binding domain). Interacts (via homeobox DNA-binding domain) with POU4F2; this interaction suppresses DLX1-mediated transcriptional activity in postnatal retina and enhances retinal ganglion cell (RGC) differentiation.

The protein localises to the nucleus. Its function is as follows. Plays a role as a transcriptional activator or repressor. Inhibits several cytokine signaling pathways, such as TGFB1, activin-A/INHBA and BMP4 by interfering with the transcriptional stimulatory activity of transcription factors, such as MSX2, FAST2, SMAD2 and SMAD3 during hematopoietic cell differentiation. Plays a role in terminal differentiation of interneurons, such as amacrine and bipolar cells in the developing retina. Likely to play a regulatory role in the development of the ventral forebrain. May play a role in craniofacial patterning and morphogenesis and may be involved in the early development of diencephalic subdivisions. In Rattus norvegicus (Rat), this protein is Homeobox protein DLX-1 (Dlx1).